A 240-amino-acid chain; its full sequence is UPF0173 metal-dependent hydrolase OE_2513F (240 aa).

Belongs to the UPF0173 family.

The polypeptide is UPF0173 metal-dependent hydrolase OE_2513F (Halobacterium salinarum (strain ATCC 29341 / DSM 671 / R1)).